A 424-amino-acid polypeptide reads, in one-letter code: Probable serine/threonine-protein kinase PBL6 (424 aa).

The interval 1 to 26 (MGCFGRTPKSNKRSDTKTTKNNDFTP) is disordered. G2 is lipidated: N-myristoyl glycine. The S-palmitoyl cysteine moiety is linked to residue C3. T87 is modified (phosphothreonine). Residues 98-377 (FKSDCFLGEG…VVMALDHLAS (280 aa)) form the Protein kinase domain. Residues 104–112 (LGEGGFGKV) and K127 each bind ATP. Position 172 is a phosphotyrosine (Y172). D225 (proton acceptor) is an active-site residue. 2 positions are modified to phosphoserine: S229 and S259. Residues T260 and T265 each carry the phosphothreonine modification. Y273 bears the Phosphotyrosine mark.

The protein belongs to the protein kinase superfamily. Ser/Thr protein kinase family.

Its subcellular location is the cell membrane. The enzyme catalyses L-seryl-[protein] + ATP = O-phospho-L-seryl-[protein] + ADP + H(+). It catalyses the reaction L-threonyl-[protein] + ATP = O-phospho-L-threonyl-[protein] + ADP + H(+). In terms of biological role, may be involved in plant defense signaling. This chain is Probable serine/threonine-protein kinase PBL6, found in Arabidopsis thaliana (Mouse-ear cress).